Reading from the N-terminus, the 167-residue chain is Xanthine-guanine phosphoribosyltransferase (167 aa).

Residues 47–48, Gln79, and 102–110 each bind 5-phospho-alpha-D-ribose 1-diphosphate; these read RG and DDLVDSGKT. Gln79 lines the GMP pocket. Asp103 contacts Mg(2+). Asp106 and Ile149 together coordinate guanine. Xanthine contacts are provided by Asp106 and Ile149. GMP contacts are provided by residues 106–110 and 148–149; these read DSGKT and WI.

This sequence belongs to the purine/pyrimidine phosphoribosyltransferase family. XGPT subfamily. Homotetramer. It depends on Mg(2+) as a cofactor.

Its subcellular location is the cell inner membrane. The enzyme catalyses GMP + diphosphate = guanine + 5-phospho-alpha-D-ribose 1-diphosphate. It catalyses the reaction XMP + diphosphate = xanthine + 5-phospho-alpha-D-ribose 1-diphosphate. The catalysed reaction is IMP + diphosphate = hypoxanthine + 5-phospho-alpha-D-ribose 1-diphosphate. It functions in the pathway purine metabolism; GMP biosynthesis via salvage pathway; GMP from guanine: step 1/1. Its pathway is purine metabolism; XMP biosynthesis via salvage pathway; XMP from xanthine: step 1/1. Purine salvage pathway enzyme that catalyzes the transfer of the ribosyl-5-phosphate group from 5-phospho-alpha-D-ribose 1-diphosphate (PRPP) to the N9 position of the 6-oxopurines guanine and xanthine to form the corresponding ribonucleotides GMP (guanosine 5'-monophosphate) and XMP (xanthosine 5'-monophosphate), with the release of PPi. To a lesser extent, also acts on hypoxanthine. The polypeptide is Xanthine-guanine phosphoribosyltransferase (Cereibacter sphaeroides (strain ATCC 17029 / ATH 2.4.9) (Rhodobacter sphaeroides)).